Here is a 139-residue protein sequence, read N- to C-terminus: Lysozyme (139 aa).

An N-terminal signal peptide occupies residues 1 to 19 (MTKYVILLAVLAFALHCDA). Positions 20–139 (KRFTRCGLVQ…QHGLPDISDC (120 aa)) constitute a C-type lysozyme domain. Intrachain disulfides connect cysteine 25-cysteine 139, cysteine 46-cysteine 129, cysteine 81-cysteine 95, and cysteine 91-cysteine 109. Residues glutamate 51 and aspartate 69 contribute to the active site.

It belongs to the glycosyl hydrolase 22 family.

It carries out the reaction Hydrolysis of (1-&gt;4)-beta-linkages between N-acetylmuramic acid and N-acetyl-D-glucosamine residues in a peptidoglycan and between N-acetyl-D-glucosamine residues in chitodextrins.. Lysozymes have primarily a bacteriolytic function; those in tissues and body fluids are associated with the monocyte-macrophage system and enhance the activity of immunoagents. This Hyalophora cecropia (Cecropia moth) protein is Lysozyme.